We begin with the raw amino-acid sequence, 245 residues long: Carboxy-S-adenosyl-L-methionine synthase (245 aa).

S-adenosyl-L-methionine-binding positions include tyrosine 39, glycine 64–serine 66, aspartate 117–isoleucine 118, and arginine 199.

Belongs to the class I-like SAM-binding methyltransferase superfamily. Cx-SAM synthase family. In terms of assembly, homodimer.

The catalysed reaction is prephenate + S-adenosyl-L-methionine = carboxy-S-adenosyl-L-methionine + 3-phenylpyruvate + H2O. Catalyzes the conversion of S-adenosyl-L-methionine (SAM) to carboxy-S-adenosyl-L-methionine (Cx-SAM). This is Carboxy-S-adenosyl-L-methionine synthase from Desulfotalea psychrophila (strain LSv54 / DSM 12343).